The sequence spans 208 residues: Uridine kinase (208 aa).

Gly12–Thr19 contacts ATP.

Belongs to the uridine kinase family.

It is found in the cytoplasm. The catalysed reaction is uridine + ATP = UMP + ADP + H(+). It carries out the reaction cytidine + ATP = CMP + ADP + H(+). It functions in the pathway pyrimidine metabolism; CTP biosynthesis via salvage pathway; CTP from cytidine: step 1/3. It participates in pyrimidine metabolism; UMP biosynthesis via salvage pathway; UMP from uridine: step 1/1. In Streptococcus pyogenes serotype M3 (strain ATCC BAA-595 / MGAS315), this protein is Uridine kinase.